We begin with the raw amino-acid sequence, 90 residues long: Small ribosomal subunit protein uS15c (90 aa).

The protein belongs to the universal ribosomal protein uS15 family. In terms of assembly, part of the 30S ribosomal subunit.

It localises to the plastid. The protein localises to the chloroplast. The polypeptide is Small ribosomal subunit protein uS15c (rps15-A) (Zea mays (Maize)).